The following is a 132-amino-acid chain: Small ribosomal subunit protein uS12 (132 aa).

Asp-89 carries the 3-methylthioaspartic acid modification. The segment at 102-132 (LDTSGVADRKQSRSKYGAKVPKAGAAPAKKK) is disordered. Low complexity predominate over residues 118–132 (GAKVPKAGAAPAKKK).

It belongs to the universal ribosomal protein uS12 family. Part of the 30S ribosomal subunit. Contacts proteins S8 and S17. May interact with IF1 in the 30S initiation complex.

Functionally, with S4 and S5 plays an important role in translational accuracy. Interacts with and stabilizes bases of the 16S rRNA that are involved in tRNA selection in the A site and with the mRNA backbone. Located at the interface of the 30S and 50S subunits, it traverses the body of the 30S subunit contacting proteins on the other side and probably holding the rRNA structure together. The combined cluster of proteins S8, S12 and S17 appears to hold together the shoulder and platform of the 30S subunit. The sequence is that of Small ribosomal subunit protein uS12 from Chlorobaculum tepidum (strain ATCC 49652 / DSM 12025 / NBRC 103806 / TLS) (Chlorobium tepidum).